The chain runs to 368 residues: tRNA-specific 2-thiouridylase MnmA (368 aa).

Residues 10–17 and Met36 each bind ATP; that span reads AMSGGIDS. Catalysis depends on Cys106, which acts as the Nucleophile. Cys106 and Cys203 are oxidised to a cystine. Residue Gly130 coordinates ATP. An interaction with tRNA region spans residues 152–154; it reads KDQ. The Cysteine persulfide intermediate role is filled by Cys203. The interaction with tRNA stretch occupies residues 313 to 314; the sequence is RY.

It belongs to the MnmA/TRMU family.

The protein localises to the cytoplasm. The enzyme catalyses S-sulfanyl-L-cysteinyl-[protein] + uridine(34) in tRNA + AH2 + ATP = 2-thiouridine(34) in tRNA + L-cysteinyl-[protein] + A + AMP + diphosphate + H(+). Catalyzes the 2-thiolation of uridine at the wobble position (U34) of tRNA, leading to the formation of s(2)U34. This chain is tRNA-specific 2-thiouridylase MnmA, found in Cytophaga hutchinsonii (strain ATCC 33406 / DSM 1761 / CIP 103989 / NBRC 15051 / NCIMB 9469 / D465).